We begin with the raw amino-acid sequence, 471 residues long: Heat shock 70 kDa protein 13 (471 aa).

Residues 1-22 form the signal peptide; sequence MAGEMTILGSAVLTLLLAGYLA. The tract at residues 315–337 is disordered; it reads ENDRKGPPTSDSELPKDKFSQAN.

Belongs to the heat shock protein 70 family. In terms of assembly, binds UBQLN2.

It is found in the microsome. It localises to the endoplasmic reticulum. In terms of biological role, has peptide-independent ATPase activity. The chain is Heat shock 70 kDa protein 13 (HSPA13) from Bos taurus (Bovine).